We begin with the raw amino-acid sequence, 727 residues long: Pollen-specific leucine-rich repeat extensin-like protein 3 (727 aa).

The signal sequence occupies residues 1–22 (MPHIYKQPLGIFQGFVPTLTDA). The LRR 1 repeat unit spans residues 19–43 (LTDAEVSFIAQRQLLTLPENGELPD). An N-linked (GlcNAc...) asparagine glycan is attached at Asn-80. 9 LRR repeats span residues 107-131 (VAVV…LGLM), 132-154 (TDVA…SFEK), 156-179 (SLMH…VLSW), 180-202 (PAVK…ELFK), 203-226 (KDLD…LGES), 228-249 (ASVV…IGNM), 250-273 (KNLN…IGKL), 275-296 (NVNV…SFVG), and 297-321 (LTSM…ICKL). N-linked (GlcNAc...) asparagine glycosylation occurs at Asn-326. The segment at 381-727 (SKDKCAGGSS…SPPPPMFQGY (347 aa)) is disordered. 5 stretches are compositionally biased toward pro residues: residues 397-419 (SPSP…PQPN), 446-457 (SPPPASSPPTSP), 466-479 (VHKP…PQPN), 492-677 (SPPP…PKMS), and 718-727 (SPPPPMFQGY). The tract at residues 432-727 (SPPPPQQPHH…SPPPPMFQGY (296 aa)) is contains the Ser-Pro(4) repeats.

Hydroxylated on proline residues in the S-P-P-P-P repeat. In terms of processing, O-glycosylated on hydroxyprolines. Expressed in flowers, stamen, pollen, and pollinated carpels.

The protein resides in the secreted. It localises to the cell wall. Its function is as follows. Modulates cell morphogenesis by regulating cell wall formation and assembly, and/or growth polarization. The sequence is that of Pollen-specific leucine-rich repeat extensin-like protein 3 (PEX3) from Arabidopsis thaliana (Mouse-ear cress).